Reading from the N-terminus, the 150-residue chain is Ribosome maturation factor RimP (150 aa).

The protein belongs to the RimP family.

The protein resides in the cytoplasm. Its function is as follows. Required for maturation of 30S ribosomal subunits. This chain is Ribosome maturation factor RimP, found in Thermotoga sp. (strain RQ2).